Here is a 415-residue protein sequence, read N- to C-terminus: Gamma-glutamyl phosphate reductase (415 aa).

This sequence belongs to the gamma-glutamyl phosphate reductase family.

It localises to the cytoplasm. It carries out the reaction L-glutamate 5-semialdehyde + phosphate + NADP(+) = L-glutamyl 5-phosphate + NADPH + H(+). The protein operates within amino-acid biosynthesis; L-proline biosynthesis; L-glutamate 5-semialdehyde from L-glutamate: step 2/2. Catalyzes the NADPH-dependent reduction of L-glutamate 5-phosphate into L-glutamate 5-semialdehyde and phosphate. The product spontaneously undergoes cyclization to form 1-pyrroline-5-carboxylate. This is Gamma-glutamyl phosphate reductase from Salmonella dublin (strain CT_02021853).